Consider the following 137-residue polypeptide: Small ribosomal subunit protein uS12 (137 aa).

Residues 1–23 (MPTINQLVRKPRKSNATKSKSPA) are disordered. Residue Asp102 is modified to 3-methylthioaspartic acid.

The protein belongs to the universal ribosomal protein uS12 family. As to quaternary structure, part of the 30S ribosomal subunit. Contacts proteins S8 and S17. May interact with IF1 in the 30S initiation complex.

In terms of biological role, with S4 and S5 plays an important role in translational accuracy. Functionally, interacts with and stabilizes bases of the 16S rRNA that are involved in tRNA selection in the A site and with the mRNA backbone. Located at the interface of the 30S and 50S subunits, it traverses the body of the 30S subunit contacting proteins on the other side and probably holding the rRNA structure together. The combined cluster of proteins S8, S12 and S17 appears to hold together the shoulder and platform of the 30S subunit. This is Small ribosomal subunit protein uS12 from Leuconostoc citreum (strain KM20).